Consider the following 527-residue polypeptide: Peptide chain release factor 3 (527 aa).

One can recognise a tr-type G domain in the interval 9–278 (NKRRTFAIIS…GLTQWAPKPQ (270 aa)). GTP-binding positions include 18-25 (SHPDAGKT), 86-90 (DTPGH), and 140-143 (NKLD).

This sequence belongs to the TRAFAC class translation factor GTPase superfamily. Classic translation factor GTPase family. PrfC subfamily.

It localises to the cytoplasm. Its function is as follows. Increases the formation of ribosomal termination complexes and stimulates activities of RF-1 and RF-2. It binds guanine nucleotides and has strong preference for UGA stop codons. It may interact directly with the ribosome. The stimulation of RF-1 and RF-2 is significantly reduced by GTP and GDP, but not by GMP. The protein is Peptide chain release factor 3 of Haemophilus influenzae (strain PittEE).